A 290-amino-acid polypeptide reads, in one-letter code: 33 kDa chaperonin (290 aa).

2 cysteine pairs are disulfide-bonded: Cys-235–Cys-237 and Cys-268–Cys-271.

It belongs to the HSP33 family. In terms of processing, under oxidizing conditions two disulfide bonds are formed involving the reactive cysteines. Under reducing conditions zinc is bound to the reactive cysteines and the protein is inactive.

Its subcellular location is the cytoplasm. Functionally, redox regulated molecular chaperone. Protects both thermally unfolding and oxidatively damaged proteins from irreversible aggregation. Plays an important role in the bacterial defense system toward oxidative stress. The protein is 33 kDa chaperonin of Streptococcus pyogenes serotype M3 (strain ATCC BAA-595 / MGAS315).